A 615-amino-acid polypeptide reads, in one-letter code: AP-1-like transcription factor yap1 (615 aa).

Positions 27-50 (SSNNPTQKQQTVTHNSEANQNLNH) are enriched in polar residues. Disordered stretches follow at residues 27–84 (SSNN…EDSP) and 99–180 (NESL…RKEK). Positions 35–42 (QQTVTHNS) match the Bipartite nuclear localization signal motif. Residues 52–67 (PGHASSGSFSVSPPSG) are compositionally biased toward low complexity. The Bipartite nuclear localization signal motif lies at 68 to 75 (LDGSVNQS). Residues 118–147 (PGDKRKDIDGQVNDKEDSGKKRRESDEKAA) are compositionally biased toward basic and acidic residues. The bZIP domain maps to 157-220 (SEPTSKRKAQ…ERLQLELKEY (64 aa)). The tract at residues 162–183 (KRKAQNRAAQRAFRERKEKHLK) is basic motif. Positions 185–192 (LEAKVEEL) are leucine-zipper. The interval 214–364 (QLELKEYRKR…RGYQVNSSYS (151 aa)) is transcription activation 1. Residues 270–294 (LFTNTQTSKSNQNKAKDNPTATPRS) are compositionally biased toward polar residues. Positions 270–416 (LFTNTQTSKS…AVKATESSTP (147 aa)) are disordered. Residues 289–301 (TATPRSEAQVPGV) form a n-CRD region. Low complexity predominate over residues 310 to 321 (SSPNGLSNGPSP). Polar residues-rich tracts occupy residues 322–344 (AKSTPSGQTPNSQTSTRPGSGTL) and 358–369 (QVNSSYSASTKQ). Positions 372-394 (HDTPSSDSPSSSSDSHQSQLLSS) are enriched in low complexity. The tract at residues 409-508 (KATESSTPHA…SQDFGTFFDD (100 aa)) is transcription activation 2. 3 disulfides stabilise this stretch: cysteine 562–cysteine 586, cysteine 562–cysteine 595, and cysteine 586–cysteine 595. The segment at 562–595 (CNKIWDRLQSMEKFRNGEIDVDNLCSELRTKARC) is c-CRD. The short motif at 580-587 (IDVDNLCS) is the Nuclear export signal element.

It belongs to the bZIP family. YAP subfamily. Depending on the oxidative stress inducing agent, yap1 can undergo two distinct conformational changes, both involving disulfide bond formation, and both masking the nuclear export signal, thus abolishing nuclear export.

It is found in the nucleus. The protein localises to the cytoplasm. Its function is as follows. Transcription activator involved in oxidative stress response and redox homeostasis. Regulates the transcription of genes encoding antioxidant enzymes and components of the cellular thiol-reducing pathways, including thioredoxin peroxidase (aspF3), cytochrome peroxidase, and the protein AFUA_3G00730, which appears to belong to the glutathione S-transferase family. Proteins of the protein degradation pathway are also regulated by yap1, as well the p-nitroreductase family protein AFUA_5G09910. May be involved in antifungal resistance to voriconazole. The protein is AP-1-like transcription factor yap1 of Aspergillus fumigatus (strain ATCC MYA-4609 / CBS 101355 / FGSC A1100 / Af293) (Neosartorya fumigata).